We begin with the raw amino-acid sequence, 134 residues long: Lymphocyte antigen 6F (134 aa).

The first 26 residues, 1–26 (MDSCHTTKSCVLILLVVLLCAERAQG), serve as a signal peptide directing secretion. Residues 27–119 (LECYNCLGVS…TGGSTWTMTR (93 aa)) form the UPAR/Ly6 domain. Intrachain disulfides connect cysteine 29–cysteine 53, cysteine 32–cysteine 41, cysteine 46–cysteine 74, cysteine 78–cysteine 98, and cysteine 99–cysteine 104. The GPI-anchor amidated glycine moiety is linked to residue glycine 112. Residues 113 to 134 (STWTMTRVLLLNLGSVFLQTLL) constitute a propeptide, removed in mature form.

The protein resides in the cell membrane. This Mus musculus (Mouse) protein is Lymphocyte antigen 6F (Ly6f).